The following is a 62-amino-acid chain: uncharacterized protein (62 aa).

The segment at 1–26 is disordered; it reads MGELAASANHGHSPCYPERKGTPGDL. Basic and acidic residues predominate over residues 17-26; it reads PERKGTPGDL.

This is an uncharacterized protein from Homo sapiens (Human).